The sequence spans 847 residues: Alanine--tRNA ligase (847 aa).

Zn(2+) is bound by residues histidine 554, histidine 558, cysteine 656, and histidine 660.

Belongs to the class-II aminoacyl-tRNA synthetase family. The cofactor is Zn(2+).

The protein resides in the cytoplasm. It catalyses the reaction tRNA(Ala) + L-alanine + ATP = L-alanyl-tRNA(Ala) + AMP + diphosphate. Catalyzes the attachment of alanine to tRNA(Ala) in a two-step reaction: alanine is first activated by ATP to form Ala-AMP and then transferred to the acceptor end of tRNA(Ala). Also edits incorrectly charged Ser-tRNA(Ala) and Gly-tRNA(Ala) via its editing domain. In Helicobacter pylori (strain J99 / ATCC 700824) (Campylobacter pylori J99), this protein is Alanine--tRNA ligase.